We begin with the raw amino-acid sequence, 585 residues long: Pyruvate kinase (585 aa).

Arginine 32 provides a ligand contact to substrate. Positions 34, 36, 66, and 67 each coordinate K(+). An ATP-binding site is contributed by 34 to 37 (NFSH). Residues arginine 73 and lysine 156 each contribute to the ATP site. A Mg(2+)-binding site is contributed by glutamate 221. Substrate is bound by residues glycine 244, aspartate 245, and threonine 277. Aspartate 245 is a binding site for Mg(2+).

This sequence belongs to the pyruvate kinase family. The protein in the C-terminal section; belongs to the PEP-utilizing enzyme family. Mg(2+) serves as cofactor. K(+) is required as a cofactor.

The catalysed reaction is pyruvate + ATP = phosphoenolpyruvate + ADP + H(+). It participates in carbohydrate degradation; glycolysis; pyruvate from D-glyceraldehyde 3-phosphate: step 5/5. The sequence is that of Pyruvate kinase (pyk) from Staphylococcus epidermidis (strain ATCC 35984 / DSM 28319 / BCRC 17069 / CCUG 31568 / BM 3577 / RP62A).